The sequence spans 433 residues: MSVFKGEVTTLPPDKSISHRAALIGALAEGVTEITNFSGGFDNQSTLGVLGACGIPLTQEEVPGPWGGTIRRVVIESKGLWSFRPSGAPLECNNSGSTMRMMAGILAGQPFGSELVGDGSLMKRPMQRVAGPLRDMGAGVELSESGTAPMRIAGTKELRPIVYRLPVPSAQVKSLVAFAALHAEGESRIIEPVLSRDHTELMLGLEASEVDGERVIVVPGRRRIEARPFLVPADPSAACFIVALALLAPGSEIMIRDVCLNPTRAAFLDIMIAAGGQITIENRRTVGGEDIGDILARGGGVLEPLSISDPGVVARVIDEIPMLAVLSVFASGSFEVSNAGELRTKECDRLNALAVNLQRLGCLCEESPDGMRVSGGVRAQHSPVVVECFDDHRIAMSFAIAARATGMDIELSDSAVVGVSFPNFFALLESLEV.

3 residues coordinate 3-phosphoshikimate: Lys15, Ser16, and Arg20. Lys15 serves as a coordination point for phosphoenolpyruvate. Residues Gly96 and Arg124 each contribute to the phosphoenolpyruvate site. 3-phosphoshikimate-binding residues include Ser169, Gln171, Asp318, and Lys345. Gln171 contributes to the phosphoenolpyruvate binding site. Asp318 functions as the Proton acceptor in the catalytic mechanism. Phosphoenolpyruvate contacts are provided by Arg349 and Arg393.

Belongs to the EPSP synthase family. As to quaternary structure, monomer.

It localises to the cytoplasm. It carries out the reaction 3-phosphoshikimate + phosphoenolpyruvate = 5-O-(1-carboxyvinyl)-3-phosphoshikimate + phosphate. The protein operates within metabolic intermediate biosynthesis; chorismate biosynthesis; chorismate from D-erythrose 4-phosphate and phosphoenolpyruvate: step 6/7. Catalyzes the transfer of the enolpyruvyl moiety of phosphoenolpyruvate (PEP) to the 5-hydroxyl of shikimate-3-phosphate (S3P) to produce enolpyruvyl shikimate-3-phosphate and inorganic phosphate. This chain is 3-phosphoshikimate 1-carboxyvinyltransferase, found in Chlorobium phaeovibrioides (strain DSM 265 / 1930) (Prosthecochloris vibrioformis (strain DSM 265)).